Consider the following 308-residue polypeptide: MFIKVLGSAAGGGFPQWNCNCANCQGLRDGTIQAAPRTQSSIIVSDNGKEWVLCNASPDISQQIAHTPELNKAGVLRGTHIGGIILTDSQIDHTTGLLSLREGCPHQVWCTPEVHEDLSTGFPVFTMLRHWNGGLVHHPIAPQQPFTVDACPDLQFTAVPIASNAPPYSPYRDRPLPGHNVALFIENRRNGQTLFYAPGLGEPDEALLPWLQKADCLLIDGTVWQDDELQAAGVGRNTGRDMGHLALGDEHGMMALLASLPAKRKILIHINNTNPILNEQSPQRQALTQQGIEVSWDGMAITLQDTAC.

The protein belongs to the PqqB family.

The protein operates within cofactor biosynthesis; pyrroloquinoline quinone biosynthesis. In terms of biological role, may be involved in the transport of PQQ or its precursor to the periplasm. This chain is Coenzyme PQQ synthesis protein B, found in Klebsiella pneumoniae subsp. pneumoniae (strain ATCC 700721 / MGH 78578).